Consider the following 335-residue polypeptide: Basic endochitinase B (335 aa).

A signal peptide spans 1–33 (MPPQKENHRTLNKMKTNLFLFLIFSLLLSLSSA). The Chitin-binding type-1 domain occupies 34-75 (EQCGRQAGGALCPNGLCCSEFGWCGNTEPYCKQPGCQSQCTP). 7 disulfides stabilise this stretch: Cys36–Cys51, Cys45–Cys57, Cys50–Cys64, Cys69–Cys73, Cys107–Cys169, Cys181–Cys189, and Cys288–Cys320. Catalysis depends on Glu151, which acts as the Proton donor. Positions 329–335 (GLLEAAI) are cleaved as a propeptide — removed in mature form. The Vacuolar targeting signal signature appears at 329–335 (GLLEAAI).

This sequence belongs to the glycosyl hydrolase 19 family. Chitinase class I subfamily. High constitutive level in roots with lower levels in leaves and flowering shoots.

It localises to the vacuole. The enzyme catalyses Random endo-hydrolysis of N-acetyl-beta-D-glucosaminide (1-&gt;4)-beta-linkages in chitin and chitodextrins.. Its function is as follows. Defense against chitin-containing fungal pathogens. Seems particularly implicated in resistance to jasmonate-inducing pathogens such as A.brassicicola. In vitro antifungal activity against T.reesei, but not against A.solani, F.oxysporum, S.sclerotiorum, G.graminis and P.megasperma. This chain is Basic endochitinase B (CHI-B), found in Arabidopsis thaliana (Mouse-ear cress).